A 202-amino-acid polypeptide reads, in one-letter code: Syndecan-4 (202 aa).

A signal peptide spans 1–22; that stretch reads MASPRLLALLLLLVGAFNAAAA. The Extracellular portion of the chain corresponds to 23–152; the sequence is ESIRETEVIN…NIFERTEVLS (130 aa). Disordered regions lie at residues 41 to 75 and 87 to 112; these read YFSG…GPED and VPLD…ELEE. Ser43 carries an O-linked (Xyl...) (glycosaminoglycan) serine glycan. Over residues 46 to 63 the composition is skewed to acidic residues; it reads LPDDEDVGGPGQEPDDFE. Ser65 and Ser67 each carry an O-linked (Xyl...) (glycosaminoglycan) serine glycan. Residues 153 to 173 form a helical membrane-spanning segment; it reads ALIVGGIVGILFAVFLVLLLV. At 174–202 the chain is on the cytoplasmic side; that stretch reads YRMKKKDEGSYDLGKKPIYKKAPTNEFYA.

The protein belongs to the syndecan proteoglycan family. As to quaternary structure, homodimer. Interacts with CDCP1 and SDCBP. Interacts (via its cytoplasmic domain) with GIPC (via its PDZ domain). Interacts (via its cytoplasmic domain) with NUDT16L1. Interacts with DNM2; this interaction is markedly enhanced at focal ahesion site upon induction of focal adhesions and stress-fiber formation. Post-translationally, shedding, cleavage of the extracellular domain to release a soluble form, is enhanced by a number of factors such as heparanase, growth factor receptor action for example by thrombin or EGF. Physiological events such as stress or wound healing can activate the shedding. PMA-mediated shedding is inhibited by TIMP3. O-glycosylated; contains both chondroitin sulfate and heparan sulfate. Ser-43, Ser-65 and Ser-67 can all be modified by either chondroitin sulfate or heparan sulfate, and the protein exists in forms that contain only chondroitin sulfate, only heparan sulfate and both chondroitin sulfate and heparan sulfate.

It localises to the membrane. Its subcellular location is the secreted. In terms of biological role, cell surface proteoglycan which regulates exosome biogenesis in concert with SDCBP and PDCD6IP. This chain is Syndecan-4, found in Sus scrofa (Pig).